The sequence spans 47 residues: Protein YqgG (47 aa).

This Escherichia coli (strain K12) protein is Protein YqgG.